Consider the following 162-residue polypeptide: UPF0114 protein Sfri_3655 (162 aa).

Transmembrane regions (helical) follow at residues 15 to 35 (IMAP…IKFF), 53 to 73 (LVLI…LIMV), and 136 to 156 (IMWY…MGYL).

The protein belongs to the UPF0114 family.

The protein localises to the cell membrane. This is UPF0114 protein Sfri_3655 from Shewanella frigidimarina (strain NCIMB 400).